The primary structure comprises 617 residues: Neurosecretory protein VGF (617 aa).

Residues 1-23 (MKTFTLPASVLFCFLLLIQGLGA) form the signal peptide. Disordered stretches follow at residues 29–75 (PDVF…GELF), 93–204 (RPAS…ESPG), and 239–262 (SESA…THLG). Over residues 48-64 (AVSRPKDDGVPEVRAAR) the composition is skewed to basic and acidic residues. The segment covering 149–160 (DPEEDDRSEELE) has biased composition (acidic residues). Residues 182–197 (ETAAAETETRTHTLTR) are compositionally biased toward low complexity. A Pyrrolidone carboxylic acid modification is found at Gln313. Basic and acidic residues predominate over residues 345–364 (RQRDLGGRELQETQQERENE). A disordered region spans residues 345 to 599 (RQRDLGGREL…EEADAEERRL (255 aa)). Residues 378-397 (EDDVGEEDEEAAEAEAEAEE) are compositionally biased toward acidic residues. Positions 418 to 436 (AEDKRSQEEAPGHRRKDAE) are enriched in basic and acidic residues. Ser423 carries the post-translational modification Phosphoserine. The span at 437–452 (GAEEGGEEDDDDEEMD) shows a compositional bias: acidic residues. A compositionally biased stretch (pro residues) spans 491–501 (PPEPVPPPRAA). Residues 577 to 599 (HHPDLEAQARRAQEEADAEERRL) are compositionally biased toward basic and acidic residues.

Interacts with HSPA8 on cell membrane. Interacts with C3AR1. Interacts with C1QBP.

The protein resides in the secreted. It is found in the cytoplasmic vesicle. The protein localises to the secretory vesicle. Its function is as follows. Secreted polyprotein that is packaged and proteolytically processed by prohormone convertases PCSK1 and PCSK2 in a cell-type-specific manner. VGF and peptides derived from its processing play many roles in neurogenesis and neuroplasticity associated with learning, memory, depression and chronic pain. In terms of biological role, plays a role in the control of body fluid homeostasis by regulating vasopressin release. Suppresses presynaptic glutamatergic neurons connected to vasopressin neurons. Plays a role in the control of body fluid homeostasis by regulating vasopressin release. Activates GABAergic interneurons which are inhibitory neurons of the nervous system and thereby suppresses presynaptic glutamatergic neurons. Also stimulates feeding behavior in an orexin-dependent manner in the hypothalamus. Functions as a positive regulator for the activation of orexin neurons resulting in elevated gastric acid secretion and gastric emptying. Functionally, secreted multifunctional peptide that interacts with different receptors and thereby plays multiple physiological roles including modulation of energy expenditure, pain, response to stress, gastric regulation as well as lipolysis. Activates the G-protein-coupled receptor C3AR1 via a folding-upon-binding mechanism leading to enhanced lipolysis in adipocytes. Interacts with gC1qR receptor in macrophages and microglia causing increased levels of intracellular calcium and hypersensitivity. Its function is as follows. Plays a role in the regulation of memory formation and depression-related behaviors potentially by influencing synaptic plasticity and neurogenesis. Induces acute and transient activation of the NTRK2/TRKB receptor and subsequent CREB phosphorylation. Also induces insulin secretion in insulinoma cells by increasing intracellular calcium mobilization. This chain is Neurosecretory protein VGF, found in Mus musculus (Mouse).